Here is a 288-residue protein sequence, read N- to C-terminus: Phenazine biosynthesis-like domain-containing protein (288 aa).

Glu-46 is a catalytic residue.

The protein belongs to the PhzF family. In terms of assembly, interacts with UNRIP/MAWD.

In Pongo abelii (Sumatran orangutan), this protein is Phenazine biosynthesis-like domain-containing protein (PBLD).